A 200-amino-acid polypeptide reads, in one-letter code: Blue fluorescence protein (200 aa).

Lumazine-binding repeat units follow at residues 1-111 and 112-200; these read MFKG…TGGR and SLSG…AGNW.

In terms of assembly, monomer.

It is found in the cytoplasm. In terms of biological role, blue fluorescence protein (BFP) that can bind 6,7-dimethyl-8-ribityllumazine, riboflavin, and 6-methyl-7-oxo-8-ribityllumazine as a bound fluorophore. Has no riboflavin-synthase activity. This Aliivibrio fischeri (Vibrio fischeri) protein is Blue fluorescence protein.